The primary structure comprises 195 residues: Adenylate kinase (195 aa).

8–16 contacts ATP; sequence GIPGVGKTT.

The protein belongs to the archaeal adenylate kinase family. In terms of assembly, homotrimer.

It is found in the cytoplasm. The catalysed reaction is AMP + ATP = 2 ADP. In Saccharolobus solfataricus (strain ATCC 35092 / DSM 1617 / JCM 11322 / P2) (Sulfolobus solfataricus), this protein is Adenylate kinase (adkA).